The primary structure comprises 109 residues: Sperm-specific class P protein 16 (109 aa).

In terms of domain architecture, MSP spans 2-109; that stretch reads SLTADPPACT…TVTIPMSATA (108 aa).

As to expression, expressed at higher level in testis.

This Caenorhabditis elegans protein is Sperm-specific class P protein 16 (ssp-16).